Here is a 435-residue protein sequence, read N- to C-terminus: Xylose isomerase (435 aa).

Active-site residues include His-100 and Asp-103. Mg(2+) is bound by residues Glu-231, Glu-267, His-270, Asp-295, Asp-306, Asp-308, and Asp-338.

The protein belongs to the xylose isomerase family. Homotetramer. Mg(2+) is required as a cofactor.

It localises to the cytoplasm. It carries out the reaction alpha-D-xylose = alpha-D-xylulofuranose. This chain is Xylose isomerase, found in Brucella ovis (strain ATCC 25840 / 63/290 / NCTC 10512).